The primary structure comprises 379 residues: Chaperone protein DnaJ (379 aa).

Residues 5 to 69 (DYYEVLGISK…NKRASYDQFG (65 aa)) enclose the J domain. The CR-type zinc-finger motif lies at 136–218 (GTTKEISIRK…CHGKGTENKT (83 aa)). Residues Cys149, Cys152, Cys166, Cys169, Cys192, Cys195, Cys206, and Cys209 each coordinate Zn(2+). CXXCXGXG motif repeat units follow at residues 149–156 (CETCHGDG), 166–173 (CSYCNGAG), 192–199 (CPKCNGSG), and 206–213 (CPTCHGKG).

Belongs to the DnaJ family. In terms of assembly, homodimer. Zn(2+) serves as cofactor.

It localises to the cytoplasm. Its function is as follows. Participates actively in the response to hyperosmotic and heat shock by preventing the aggregation of stress-denatured proteins and by disaggregating proteins, also in an autonomous, DnaK-independent fashion. Unfolded proteins bind initially to DnaJ; upon interaction with the DnaJ-bound protein, DnaK hydrolyzes its bound ATP, resulting in the formation of a stable complex. GrpE releases ADP from DnaK; ATP binding to DnaK triggers the release of the substrate protein, thus completing the reaction cycle. Several rounds of ATP-dependent interactions between DnaJ, DnaK and GrpE are required for fully efficient folding. Also involved, together with DnaK and GrpE, in the DNA replication of plasmids through activation of initiation proteins. The sequence is that of Chaperone protein DnaJ from Staphylococcus aureus (strain USA300 / TCH1516).